A 129-amino-acid polypeptide reads, in one-letter code: UPF0212 protein MA_1372 (129 aa).

Belongs to the UPF0212 family.

This Methanosarcina acetivorans (strain ATCC 35395 / DSM 2834 / JCM 12185 / C2A) protein is UPF0212 protein MA_1372.